Reading from the N-terminus, the 521-residue chain is DEAD-box ATP-dependent RNA helicase 1 (521 aa).

A disordered region spans residues 1–20 (MVVAMATKEEEGGPSSRVPH). The short motif at 36 to 65 (CPVAHLPRLDPRLVKPLQRMGIESFFPVQV) is the Q motif element. In terms of domain architecture, Helicase ATP-binding spans 72–302 (IGPGAFERDI…QLELQHPLLL (231 aa)). Residue 85–92 (SPTGSGKT) participates in ATP binding. The DEAD box signature appears at 213–216 (DETD). Positions 330 to 480 (SLIVLLQELR…SLPEESVETL (151 aa)) constitute a Helicase C-terminal domain. Positions 495 to 507 (LESEATKKSKSGD) are enriched in basic and acidic residues. The segment at 495–521 (LESEATKKSKSGDKAPNASKRKRTINT) is disordered.

The protein belongs to the DEAD box helicase family. DDX51/DBP6 subfamily.

It carries out the reaction ATP + H2O = ADP + phosphate + H(+). This Oryza sativa subsp. japonica (Rice) protein is DEAD-box ATP-dependent RNA helicase 1.